Consider the following 216-residue polypeptide: UPF0502 protein VC0395_0676/VC395_A0574 (216 aa).

This sequence belongs to the UPF0502 family.

This Vibrio cholerae serotype O1 (strain ATCC 39541 / Classical Ogawa 395 / O395) protein is UPF0502 protein VC0395_0676/VC395_A0574.